Here is a 360-residue protein sequence, read N- to C-terminus: Aminomethyltransferase (360 aa).

The protein belongs to the GcvT family. In terms of assembly, the glycine cleavage system is composed of four proteins: P, T, L and H.

It catalyses the reaction N(6)-[(R)-S(8)-aminomethyldihydrolipoyl]-L-lysyl-[protein] + (6S)-5,6,7,8-tetrahydrofolate = N(6)-[(R)-dihydrolipoyl]-L-lysyl-[protein] + (6R)-5,10-methylene-5,6,7,8-tetrahydrofolate + NH4(+). In terms of biological role, the glycine cleavage system catalyzes the degradation of glycine. This chain is Aminomethyltransferase, found in Pseudomonas syringae pv. tomato (strain ATCC BAA-871 / DC3000).